Consider the following 223-residue polypeptide: Immediate early response gene 2 protein (223 aa).

At methionine 1 the chain carries N-acetylmethionine. Residues 63–172 (AALPSDPRLH…PPAQAEGAFP (110 aa)) are disordered. Residues 69–78 (PRLHPPREAE) are compositionally biased toward basic and acidic residues. Residues 125–138 (SSLSDGGDAGLVPS) are compositionally biased toward low complexity.

This sequence belongs to the IER family. As to expression, expressed in activated T-cells (at protein level). Expression increases in metastatic tumor cells (at protein level).

The protein resides in the cytoplasm. It is found in the nucleus. In terms of biological role, DNA-binding protein that seems to act as a transcription factor. Involved in the regulation of neuronal differentiation, acts upon JNK-signaling pathway activation and plays a role in neurite outgrowth in hippocampal cells. May mediate with FIBP FGF-signaling in the establishment of laterality in the embryo. Promotes cell motility, seems to stimulate tumor metastasis. This chain is Immediate early response gene 2 protein, found in Homo sapiens (Human).